A 95-amino-acid polypeptide reads, in one-letter code: MDFTKEEKLLNAISKVYNEATIDDYPDLKEKLFLYSKEISEGKSVGEVSMKLSSFLGRYILKHKFGLPKSLIELQEIVSKESQVYRGWASIGIWS.

Its function is as follows. Imparts immunity to bacteriocin hiracin-JM79 to naturally sensitive host strains. This chain is Hiracin-JM79 immunity factor, found in Enterococcus hirae.